The chain runs to 354 residues: LAS seventeen-binding protein 5 (354 aa).

In terms of domain architecture, VHS spans 15–161 (TIFRIVSSRD…LGQTVKQRYS (147 aa)). Disordered regions lie at residues 160-184 (YSKSSRSRRSGGGSGGRSNFMDDSA) and 296-354 (SAQD…HNKI). A compositionally biased stretch (basic and acidic residues) spans 296–310 (SAQDDSSDESDHGSY).

The protein belongs to the LSB5 family. In terms of assembly, interacts with SLA1 and LAS17.

The protein localises to the cytoplasm. It localises to the cell cortex. Its subcellular location is the cytoskeleton. Its function is as follows. Essential for the organization of the actin cytoskeleton, fluid phase endocytosis and vesicle trafficking, together with YSC84. The chain is LAS seventeen-binding protein 5 (LSB5) from Saccharomyces cerevisiae (strain ATCC 204508 / S288c) (Baker's yeast).